Reading from the N-terminus, the 498-residue chain is Glycerol kinase (498 aa).

ADP is bound at residue threonine 14. Threonine 14, threonine 15, and serine 16 together coordinate ATP. Threonine 14 lines the sn-glycerol 3-phosphate pocket. Arginine 18 contacts ADP. Positions 84, 85, 136, and 245 each coordinate sn-glycerol 3-phosphate. Residues arginine 84, glutamate 85, tyrosine 136, aspartate 245, and glutamine 246 each coordinate glycerol. ADP-binding residues include threonine 267 and glycine 310. The ATP site is built by threonine 267, glycine 310, glutamine 314, and glycine 410. Residues glycine 410 and asparagine 414 each contribute to the ADP site.

Belongs to the FGGY kinase family.

The catalysed reaction is glycerol + ATP = sn-glycerol 3-phosphate + ADP + H(+). The protein operates within polyol metabolism; glycerol degradation via glycerol kinase pathway; sn-glycerol 3-phosphate from glycerol: step 1/1. Its activity is regulated as follows. Inhibited by fructose 1,6-bisphosphate (FBP). Functionally, key enzyme in the regulation of glycerol uptake and metabolism. Catalyzes the phosphorylation of glycerol to yield sn-glycerol 3-phosphate. The protein is Glycerol kinase of Rhodospirillum centenum (strain ATCC 51521 / SW).